Here is a 289-residue protein sequence, read N- to C-terminus: Diaminopimelate epimerase (289 aa).

Substrate contacts are provided by Asn11 and Asn78. The active-site Proton donor is the Cys87. Residues 88-89 (GN), Asn163, Asn199, and 217-218 (ER) contribute to the substrate site. Residue Cys226 is the Proton acceptor of the active site. A substrate-binding site is contributed by 227-228 (GT).

It belongs to the diaminopimelate epimerase family. Homodimer.

It localises to the cytoplasm. It carries out the reaction (2S,6S)-2,6-diaminopimelate = meso-2,6-diaminopimelate. It participates in amino-acid biosynthesis; L-lysine biosynthesis via DAP pathway; DL-2,6-diaminopimelate from LL-2,6-diaminopimelate: step 1/1. Functionally, catalyzes the stereoinversion of LL-2,6-diaminopimelate (L,L-DAP) to meso-diaminopimelate (meso-DAP), a precursor of L-lysine and an essential component of the bacterial peptidoglycan. In Mycobacterium bovis (strain ATCC BAA-935 / AF2122/97), this protein is Diaminopimelate epimerase.